The following is a 269-amino-acid chain: Endo-1,3-1,4-beta-glycanase ExoK (269 aa).

An N-terminal signal peptide occupies residues 1-29 (MTIDRYRRFARLAFIATLPLAGLATAAAA). Positions 40–252 (DDFDTLDTRV…RVAFTAAGDE (213 aa)) constitute a GH16 domain. The active-site Nucleophile is the Glu138. The active-site Proton donor is the Glu142.

The protein belongs to the glycosyl hydrolase 16 family.

The protein resides in the secreted. Its pathway is glycan metabolism; exopolysaccharide biosynthesis. In terms of biological role, cleaves high molecular weight succinoglycan to yield LMW succinoglycan. Dynamically regulates the molecular weight distribution of succinoglycan by cleaving nascent succinoglycan only during a limited period after its synthesis, perhaps before it undergoes a time-dependent change in its conformation or aggregation state. This chain is Endo-1,3-1,4-beta-glycanase ExoK (exoK), found in Rhizobium meliloti (strain 1021) (Ensifer meliloti).